A 358-amino-acid chain; its full sequence is 3-ketosteroid-9-alpha-monooxygenase, ferredoxin reductase component (358 aa).

Positions 12 to 124 (DHVLELQIAE…LAPSGNFVPT (113 aa)) constitute an FAD-binding FR-type domain. One can recognise a 2Fe-2S ferredoxin-type domain in the interval 269 to 358 (ATAVVELDGQ…SDSVEVTYDE (90 aa)). [2Fe-2S] cluster contacts are provided by Cys-305, Cys-310, Cys-313, and Cys-343.

Monomer. The two-component system 3-ketosteroid-9-alpha-monooxygenase is composed of an oxygenase component KshA and a reductase component KshB. Requires FAD as cofactor. It depends on [2Fe-2S] cluster as a cofactor.

The catalysed reaction is androsta-1,4-diene-3,17-dione + 2 reduced [2Fe-2S]-[ferredoxin] + O2 + 2 H(+) = 9alpha-hydroxyandrosta-1,4-diene-3,17-dione + 2 oxidized [2Fe-2S]-[ferredoxin] + H2O. It functions in the pathway lipid metabolism; steroid biosynthesis. In terms of biological role, involved in the degradation of cholesterol. Catalyzes the introduction of a 9a-hydroxyl moiety into 1,4-androstadiene-3,17-dione (ADD) to yield the 9alpha-hydroxy-1,4-androstadiene-3,17-dione (9OHADD) intermediate which spontaneously form 3-hydroxy-9,10-seconandrost-1,3,5(10)-triene-9,17-dione (HSA) via the meta-cleavage of ring B with concomitant aromatization of ring A. The chain is 3-ketosteroid-9-alpha-monooxygenase, ferredoxin reductase component (hmp) from Mycobacterium tuberculosis (strain CDC 1551 / Oshkosh).